The chain runs to 89 residues: Sec-independent protein translocase protein TatA (89 aa).

A helical membrane pass occupies residues 1–21 (MGGISIWQLLIIALIVVLLFG). The span at 47-61 (EEKKALEENATDKPA) shows a compositional bias: basic and acidic residues. The tract at residues 47–89 (EEKKALEENATDKPAADTAKVTETAKVAETAEKKAESKGKEQA) is disordered. The segment covering 62 to 74 (ADTAKVTETAKVA) has biased composition (low complexity). Over residues 75–89 (ETAEKKAESKGKEQA) the composition is skewed to basic and acidic residues.

It belongs to the TatA/E family. In terms of assembly, the Tat system comprises two distinct complexes: a TatABC complex, containing multiple copies of TatA, TatB and TatC subunits, and a separate TatA complex, containing only TatA subunits. Substrates initially bind to the TatABC complex, which probably triggers association of the separate TatA complex to form the active translocon.

The protein localises to the cell inner membrane. In terms of biological role, part of the twin-arginine translocation (Tat) system that transports large folded proteins containing a characteristic twin-arginine motif in their signal peptide across membranes. TatA could form the protein-conducting channel of the Tat system. In Shewanella pealeana (strain ATCC 700345 / ANG-SQ1), this protein is Sec-independent protein translocase protein TatA.